Here is a 121-residue protein sequence, read N- to C-terminus: Ubiquitin-related modifier 1 (121 aa).

Glycine 121 bears the 1-thioglycine mark. Glycine 121 participates in a covalent cross-link: Glycyl lysine isopeptide (Gly-Lys) (interchain with K-? in acceptor proteins).

This sequence belongs to the URM1 family. In terms of processing, C-terminal thiocarboxylation occurs in 2 steps, it is first acyl-adenylated (-COAMP) via the hesA/moeB/thiF part of UBA4, then thiocarboxylated (-COSH) via the rhodanese domain of UBA4.

Its subcellular location is the cytoplasm. Its pathway is tRNA modification; 5-methoxycarbonylmethyl-2-thiouridine-tRNA biosynthesis. Its function is as follows. Acts as a sulfur carrier required for 2-thiolation of mcm(5)S(2)U at tRNA wobble positions of cytosolic tRNA(Lys), tRNA(Glu) and tRNA(Gln). Serves as sulfur donor in tRNA 2-thiolation reaction by being thiocarboxylated (-COSH) at its C-terminus by the MOCS3 homolog UBA4. The sulfur is then transferred to tRNA to form 2-thiolation of mcm(5)S(2)U. Prior mcm(5) tRNA modification by the elongator complex is required for 2-thiolation. Also acts as a ubiquitin-like protein (UBL) that is covalently conjugated via an isopeptide bond to lysine residues of target proteins such as AHP1. The thiocarboxylated form serves as substrate for conjugation and oxidative stress specifically induces the formation of UBL-protein conjugates. The protein is Ubiquitin-related modifier 1 of Ajellomyces capsulatus (strain NAm1 / WU24) (Darling's disease fungus).